Consider the following 859-residue polypeptide: DNA mismatch repair protein MutS (859 aa).

Residue 617–624 (GPNMGGKS) participates in ATP binding.

It belongs to the DNA mismatch repair MutS family.

In terms of biological role, this protein is involved in the repair of mismatches in DNA. It is possible that it carries out the mismatch recognition step. This protein has a weak ATPase activity. The sequence is that of DNA mismatch repair protein MutS from Stutzerimonas stutzeri (strain A1501) (Pseudomonas stutzeri).